The primary structure comprises 77 residues: Acyl carrier protein (77 aa).

Residues 1 to 76 enclose the Carrier domain; it reads MATFDDVKAV…DVVNYIDNLK (76 aa). S36 bears the O-(pantetheine 4'-phosphoryl)serine mark.

It belongs to the acyl carrier protein (ACP) family. 4'-phosphopantetheine is transferred from CoA to a specific serine of apo-ACP by AcpS. This modification is essential for activity because fatty acids are bound in thioester linkage to the sulfhydryl of the prosthetic group.

The protein localises to the cytoplasm. The protein operates within lipid metabolism; fatty acid biosynthesis. In terms of biological role, carrier of the growing fatty acid chain in fatty acid biosynthesis. In Campylobacter jejuni subsp. doylei (strain ATCC BAA-1458 / RM4099 / 269.97), this protein is Acyl carrier protein.